The chain runs to 150 residues: Macrodomain Ter protein (150 aa).

Belongs to the MatP family. In terms of assembly, homodimer.

The protein resides in the cytoplasm. In terms of biological role, required for spatial organization of the terminus region of the chromosome (Ter macrodomain) during the cell cycle. Prevents early segregation of duplicated Ter macrodomains during cell division. Binds specifically to matS, which is a 13 bp signature motif repeated within the Ter macrodomain. The chain is Macrodomain Ter protein from Salmonella agona (strain SL483).